A 101-amino-acid polypeptide reads, in one-letter code: Urease subunit beta (101 aa).

Belongs to the urease beta subunit family. In terms of assembly, heterotrimer of UreA (gamma), UreB (beta) and UreC (alpha) subunits. Three heterotrimers associate to form the active enzyme.

It localises to the cytoplasm. It carries out the reaction urea + 2 H2O + H(+) = hydrogencarbonate + 2 NH4(+). The protein operates within nitrogen metabolism; urea degradation; CO(2) and NH(3) from urea (urease route): step 1/1. This Ruegeria pomeroyi (strain ATCC 700808 / DSM 15171 / DSS-3) (Silicibacter pomeroyi) protein is Urease subunit beta.